A 93-amino-acid polypeptide reads, in one-letter code: Putative regulatory protein Amet_2791 (93 aa).

This sequence belongs to the RemA family.

The polypeptide is Putative regulatory protein Amet_2791 (Alkaliphilus metalliredigens (strain QYMF)).